The sequence spans 370 residues: 3-dehydroquinate synthase (370 aa).

NAD(+) is bound by residues 112-116 (GVVGD), 136-137 (TS), K149, K158, and 176-179 (TLRT). Residues E191, H254, and H276 each contribute to the Zn(2+) site.

It belongs to the sugar phosphate cyclases superfamily. Dehydroquinate synthase family. NAD(+) is required as a cofactor. The cofactor is Co(2+). Requires Zn(2+) as cofactor.

It is found in the cytoplasm. It catalyses the reaction 7-phospho-2-dehydro-3-deoxy-D-arabino-heptonate = 3-dehydroquinate + phosphate. It participates in metabolic intermediate biosynthesis; chorismate biosynthesis; chorismate from D-erythrose 4-phosphate and phosphoenolpyruvate: step 2/7. Functionally, catalyzes the conversion of 3-deoxy-D-arabino-heptulosonate 7-phosphate (DAHP) to dehydroquinate (DHQ). The chain is 3-dehydroquinate synthase from Xanthomonas axonopodis pv. citri (strain 306).